A 69-amino-acid polypeptide reads, in one-letter code: Guanine nucleotide-binding protein G(I)/G(S)/G(O) subunit gamma-T2 (69 aa).

At Cys-66 the chain carries Cysteine methyl ester. Residue Cys-66 is the site of S-farnesyl cysteine attachment. A propeptide spans 67 to 69 (VLS) (removed in mature form).

The protein belongs to the G protein gamma family. In terms of assembly, g proteins are composed of 3 units, alpha, beta and gamma.

The protein localises to the cell membrane. In terms of biological role, guanine nucleotide-binding proteins (G proteins) are involved as a modulator or transducer in various transmembrane signaling systems. The beta and gamma chains are required for the GTPase activity, for replacement of GDP by GTP, and for G protein-effector interaction. The sequence is that of Guanine nucleotide-binding protein G(I)/G(S)/G(O) subunit gamma-T2 (Gngt2) from Mus musculus (Mouse).